The primary structure comprises 334 residues: Holliday junction branch migration complex subunit RuvB (334 aa).

A large ATPase domain (RuvB-L) region spans residues 4–186; sequence ADRLIAPENP…FGITQRLEYY (183 aa). ATP-binding positions include isoleucine 25, arginine 26, glycine 67, lysine 70, threonine 71, threonine 72, 133 to 135, arginine 176, tyrosine 186, and arginine 223; that span reads EDY. Residue threonine 71 coordinates Mg(2+). The interval 187-257 is small ATPAse domain (RuvB-S); that stretch reads KIPDLQNIVQ…TADKALNMLD (71 aa). The tract at residues 260–334 is head domain (RuvB-H); sequence SKGFDYMDRK…RAYLHFGIEK (75 aa). Residues arginine 315 and arginine 320 each contribute to the DNA site.

This sequence belongs to the RuvB family. As to quaternary structure, homohexamer. Forms an RuvA(8)-RuvB(12)-Holliday junction (HJ) complex. HJ DNA is sandwiched between 2 RuvA tetramers; dsDNA enters through RuvA and exits via RuvB. An RuvB hexamer assembles on each DNA strand where it exits the tetramer. Each RuvB hexamer is contacted by two RuvA subunits (via domain III) on 2 adjacent RuvB subunits; this complex drives branch migration. In the full resolvosome a probable DNA-RuvA(4)-RuvB(12)-RuvC(2) complex forms which resolves the HJ.

Its subcellular location is the cytoplasm. It carries out the reaction ATP + H2O = ADP + phosphate + H(+). The RuvA-RuvB-RuvC complex processes Holliday junction (HJ) DNA during genetic recombination and DNA repair, while the RuvA-RuvB complex plays an important role in the rescue of blocked DNA replication forks via replication fork reversal (RFR). RuvA specifically binds to HJ cruciform DNA, conferring on it an open structure. The RuvB hexamer acts as an ATP-dependent pump, pulling dsDNA into and through the RuvAB complex. RuvB forms 2 homohexamers on either side of HJ DNA bound by 1 or 2 RuvA tetramers; 4 subunits per hexamer contact DNA at a time. Coordinated motions by a converter formed by DNA-disengaged RuvB subunits stimulates ATP hydrolysis and nucleotide exchange. Immobilization of the converter enables RuvB to convert the ATP-contained energy into a lever motion, pulling 2 nucleotides of DNA out of the RuvA tetramer per ATP hydrolyzed, thus driving DNA branch migration. The RuvB motors rotate together with the DNA substrate, which together with the progressing nucleotide cycle form the mechanistic basis for DNA recombination by continuous HJ branch migration. Branch migration allows RuvC to scan DNA until it finds its consensus sequence, where it cleaves and resolves cruciform DNA. This is Holliday junction branch migration complex subunit RuvB from Vibrio vulnificus (strain YJ016).